Reading from the N-terminus, the 132-residue chain is Phosphomevalonate dehydratase small subunit (132 aa).

Ser62 serves as the catalytic Proton acceptor.

This sequence belongs to the AcnX type II small subunit family. In terms of assembly, heterodimer composed of a large subunit (PMDh-L) and a small subunit (PMDh-S).

The enzyme catalyses (R)-5-phosphomevalonate = (2E)-3-methyl-5-phosphooxypent-2-enoate + H2O. The protein operates within isoprenoid biosynthesis; isopentenyl diphosphate biosynthesis via mevalonate pathway. Component of a hydro-lyase that catalyzes the dehydration of mevalonate 5-phosphate (MVA5P) to form trans-anhydromevalonate 5-phosphate (tAHMP). Involved in the archaeal mevalonate (MVA) pathway, which provides fundamental precursors for isoprenoid biosynthesis, such as isopentenyl diphosphate (IPP) and dimethylallyl diphosphate (DMAPP). This is Phosphomevalonate dehydratase small subunit from Methanocella arvoryzae (strain DSM 22066 / NBRC 105507 / MRE50).